The sequence spans 221 residues: Cytidylate kinase 1 (221 aa).

7 to 15 is a binding site for ATP; that stretch reads GPSASGKSS.

It belongs to the cytidylate kinase family. Type 1 subfamily.

Its subcellular location is the cytoplasm. The enzyme catalyses CMP + ATP = CDP + ADP. It carries out the reaction dCMP + ATP = dCDP + ADP. In Borrelia garinii subsp. bavariensis (strain ATCC BAA-2496 / DSM 23469 / PBi) (Borreliella bavariensis), this protein is Cytidylate kinase 1.